Consider the following 340-residue polypeptide: Phenylalanine--tRNA ligase alpha subunit (340 aa).

Glu-255 contributes to the Mg(2+) binding site.

This sequence belongs to the class-II aminoacyl-tRNA synthetase family. Phe-tRNA synthetase alpha subunit type 1 subfamily. As to quaternary structure, tetramer of two alpha and two beta subunits. Mg(2+) serves as cofactor.

The protein resides in the cytoplasm. The catalysed reaction is tRNA(Phe) + L-phenylalanine + ATP = L-phenylalanyl-tRNA(Phe) + AMP + diphosphate + H(+). This Desulfitobacterium hafniense (strain Y51) protein is Phenylalanine--tRNA ligase alpha subunit.